A 26-amino-acid polypeptide reads, in one-letter code: Orexigenic neuropeptide 26RFa (26 aa).

F26 carries the post-translational modification Phenylalanine amide.

As to expression, brain.

It is found in the secreted. In terms of biological role, may have orexigenic activity. May promote aldosterone secretion by the adrenal gland. In Pelophylax lessonae (Pool frog), this protein is Orexigenic neuropeptide 26RFa.